Consider the following 298-residue polypeptide: Protoheme IX farnesyltransferase (298 aa).

8 consecutive transmembrane segments (helical) span residues 23–43 (VTQL…PGLP), 49–69 (LFGT…NCLI), 95–115 (VLSL…HLVN), 117–137 (LTMW…TVIL), 144–164 (NIVI…ASVA), 171–191 (AWVL…ALAL), 234–254 (FMHM…GIFV), and 276–296 (SILY…VGVL).

It belongs to the UbiA prenyltransferase family. Protoheme IX farnesyltransferase subfamily.

The protein localises to the cell inner membrane. The catalysed reaction is heme b + (2E,6E)-farnesyl diphosphate + H2O = Fe(II)-heme o + diphosphate. It functions in the pathway porphyrin-containing compound metabolism; heme O biosynthesis; heme O from protoheme: step 1/1. In terms of biological role, converts heme B (protoheme IX) to heme O by substitution of the vinyl group on carbon 2 of heme B porphyrin ring with a hydroxyethyl farnesyl side group. The protein is Protoheme IX farnesyltransferase of Bordetella avium (strain 197N).